Reading from the N-terminus, the 39-residue chain is MDFDFRLLIVLLPILAAAGWAVFNIGVVAMQQFQKFLNK.

The chain crosses the membrane as a helical span at residues 7-25 (LLIVLLPILAAAGWAVFNI).

The protein belongs to the PsbY family. In terms of assembly, PSII is composed of 1 copy each of membrane proteins PsbA, PsbB, PsbC, PsbD, PsbE, PsbF, PsbH, PsbI, PsbJ, PsbK, PsbL, PsbM, PsbT, PsbX, PsbY, PsbZ, Psb30/Ycf12, peripheral proteins PsbO, CyanoQ (PsbQ), PsbU, PsbV and a large number of cofactors. It forms dimeric complexes.

It localises to the cellular thylakoid membrane. In terms of biological role, loosely associated component of the core of photosystem II (PSII), it is not always seen in crystals. PSII is a light-driven water plastoquinone oxidoreductase, using light energy to abstract electrons from H(2)O, generating a proton gradient subsequently used for ATP formation. This Trichodesmium erythraeum (strain IMS101) protein is Photosystem II reaction center protein Y.